Here is a 424-residue protein sequence, read N- to C-terminus: Putative glutamate--cysteine ligase 2-3 (424 aa).

2 disordered regions span residues 1-20 and 405-424; these read MQMAGRGANRRGQHRSPVLV and GAAADAHKDPAPMLTRVRRP.

It belongs to the glutamate--cysteine ligase type 2 family. YbdK subfamily.

The enzyme catalyses L-cysteine + L-glutamate + ATP = gamma-L-glutamyl-L-cysteine + ADP + phosphate + H(+). ATP-dependent carboxylate-amine ligase which exhibits weak glutamate--cysteine ligase activity. This is Putative glutamate--cysteine ligase 2-3 from Paenarthrobacter aurescens (strain TC1).